Here is a 160-residue protein sequence, read N- to C-terminus: uncharacterized protein (160 aa).

Positions 1-18 (MELLSLAILSSFFAVANQ) are cleaved as a signal peptide.

This is an uncharacterized protein from Caenorhabditis elegans.